A 221-amino-acid polypeptide reads, in one-letter code: Translation initiation factor 6 (221 aa).

The protein belongs to the eIF-6 family.

Functionally, binds to the 50S ribosomal subunit and prevents its association with the 30S ribosomal subunit to form the 70S initiation complex. This Natronomonas pharaonis (strain ATCC 35678 / DSM 2160 / CIP 103997 / JCM 8858 / NBRC 14720 / NCIMB 2260 / Gabara) (Halobacterium pharaonis) protein is Translation initiation factor 6.